A 63-amino-acid polypeptide reads, in one-letter code: Gallinacin-4 (63 aa).

An N-terminal signal peptide occupies residues 1–19; that stretch reads MKILCFFIVLLFVAVHGAV. The propeptide occupies 20–25; the sequence is GFSRSP. 3 cysteine pairs are disulfide-bonded: Cys-31–Cys-59, Cys-38–Cys-53, and Cys-43–Cys-60.

This sequence belongs to the beta-defensin family. Strong expression in the bone marrow and testis. Widely expressed. Weak expression in the ovarian stroma, but not expressed in the ovarian follicles.

It is found in the secreted. It localises to the cytoplasmic granule. Its function is as follows. Has bactericidal activity. Potent activity against S.typhimurium and S.entiriditis. The chain is Gallinacin-4 (GAL4) from Gallus gallus (Chicken).